Consider the following 122-residue polypeptide: Small ribosomal subunit protein bS16 (122 aa).

The disordered stretch occupies residues 87–122 (VGKAKQAEARKAGAKNVAKQAAEAKAEETPADNTEA).

It belongs to the bacterial ribosomal protein bS16 family.

This is Small ribosomal subunit protein bS16 from Prochlorococcus marinus (strain MIT 9303).